Here is a 153-residue protein sequence, read N- to C-terminus: UPF0260 protein YcgN (153 aa).

It belongs to the UPF0260 family.

The sequence is that of UPF0260 protein YcgN from Shigella boydii serotype 18 (strain CDC 3083-94 / BS512).